A 384-amino-acid polypeptide reads, in one-letter code: 8-amino-7-oxononanoate synthase (384 aa).

Arginine 21 provides a ligand contact to substrate. Residue 108–109 (GF) coordinates pyridoxal 5'-phosphate. Histidine 133 is a binding site for substrate. Residues serine 179, histidine 207, and threonine 233 each contribute to the pyridoxal 5'-phosphate site. Lysine 236 is subject to N6-(pyridoxal phosphate)lysine. Threonine 352 provides a ligand contact to substrate.

It belongs to the class-II pyridoxal-phosphate-dependent aminotransferase family. BioF subfamily. Homodimer. Pyridoxal 5'-phosphate is required as a cofactor.

It catalyses the reaction 6-carboxyhexanoyl-[ACP] + L-alanine + H(+) = (8S)-8-amino-7-oxononanoate + holo-[ACP] + CO2. It participates in cofactor biosynthesis; biotin biosynthesis. Catalyzes the decarboxylative condensation of pimeloyl-[acyl-carrier protein] and L-alanine to produce 8-amino-7-oxononanoate (AON), [acyl-carrier protein], and carbon dioxide. The polypeptide is 8-amino-7-oxononanoate synthase (Escherichia coli (strain UTI89 / UPEC)).